Reading from the N-terminus, the 152-residue chain is Endoribonuclease YbeY (152 aa).

Positions 113, 117, and 123 each coordinate Zn(2+).

Belongs to the endoribonuclease YbeY family. Requires Zn(2+) as cofactor.

It is found in the cytoplasm. In terms of biological role, single strand-specific metallo-endoribonuclease involved in late-stage 70S ribosome quality control and in maturation of the 3' terminus of the 16S rRNA. The polypeptide is Endoribonuclease YbeY (Delftia acidovorans (strain DSM 14801 / SPH-1)).